A 244-amino-acid polypeptide reads, in one-letter code: NAD(P)H-quinone oxidoreductase subunit K (244 aa).

The [4Fe-4S] cluster site is built by C60, C61, C125, and C156.

This sequence belongs to the complex I 20 kDa subunit family. In terms of assembly, NDH-1 can be composed of about 15 different subunits; different subcomplexes with different compositions have been identified which probably have different functions. The cofactor is [4Fe-4S] cluster.

The protein resides in the cellular thylakoid membrane. The catalysed reaction is a plastoquinone + NADH + (n+1) H(+)(in) = a plastoquinol + NAD(+) + n H(+)(out). It catalyses the reaction a plastoquinone + NADPH + (n+1) H(+)(in) = a plastoquinol + NADP(+) + n H(+)(out). Functionally, NDH-1 shuttles electrons from an unknown electron donor, via FMN and iron-sulfur (Fe-S) centers, to quinones in the respiratory and/or the photosynthetic chain. The immediate electron acceptor for the enzyme in this species is believed to be plastoquinone. Couples the redox reaction to proton translocation, and thus conserves the redox energy in a proton gradient. Cyanobacterial NDH-1 also plays a role in inorganic carbon-concentration. This Synechococcus sp. (strain CC9902) protein is NAD(P)H-quinone oxidoreductase subunit K.